Reading from the N-terminus, the 582-residue chain is Arginine--tRNA ligase (582 aa).

A 'HIGH' region motif is present at residues Pro-127–His-137.

Belongs to the class-I aminoacyl-tRNA synthetase family. As to quaternary structure, monomer.

It localises to the cytoplasm. The enzyme catalyses tRNA(Arg) + L-arginine + ATP = L-arginyl-tRNA(Arg) + AMP + diphosphate. This Psychromonas ingrahamii (strain DSM 17664 / CCUG 51855 / 37) protein is Arginine--tRNA ligase.